Consider the following 838-residue polypeptide: MDKQFSFQGQYDFKTVSTGLYDSWSSASFFKPQKNKVPFTAILPPPNLTGTLHIGHAFEVSITDQIMRFKRLRGYGVNWIPGFDHAGIATQTKYEKLARETNPEYFQAPRKQKVKMIMDWALTQGDTIQSQIKSLGASLNWNQVNFTLSKKASQIVNDSFIQLFEQGFIYQAETLVNWDTKLNTAISNIEVINKPVDQQLYYIAYKLANNPKKRLVVATTRPETIFVDVCLFVHPKDKHYHSFVKQKVVNPLTGALMPVFTDSYVDKKFGTGVLKCTPAHDFNDFALNEKYRLPFVSCIDHNGLLNEHAKQFTGLTVSAARQQVVEFLQTQKLLVKTMPLTSNVGFSERSDTVVEPLLSKQWFVDLPKLKKALAIKKYPELIPKRFNKQVTRWLSQLKPWCISRQLIWGHPIPVWTHKQSGALHVGSTAPTDKQNYTQSTDVLDTWFSSSLWPLICLDWHKNKHFVPTDLLVTGYDILFFWVLRMTFNSYFQTKQLPFKQVLIHGLVRDAQNRKMSKSLNNGINPMDLIRDYGADATRLFLTSNHTPGDDLIFNEQKLKSAANFLNKLWNVTKYVLQLGEQAKTVPSTHLPSTLSERWIWAKLKQLIVQTTKLLDKYQLALANQALVNFIWNDFCNTFIETIKQEDTALLPQLYTTAKTVLSTAVVMLSTVTPFLAERIYQQFHSGSVMQASWPTAKAVKPPKLFADVVEAVSSLRHYKANNQLVANQNLAVVLSGKAAPVVQNYFHFNWVDLRIEVNKTPGFQIKIVDNAANNLAHLEKQRSFYLAEVQRSQAITTNPAFLKKAPPHKVKAELLKLEEYQKKLAEVNHLIAKLTKAE.

The 'HIGH' region motif lies at 46–56 (PNLTGTLHIGH). The short motif at 514–518 (KMSKS) is the 'KMSKS' region element. Residue K517 coordinates ATP. The stretch at 768-838 (VDNAANNLAH…HLIAKLTKAE (71 aa)) forms a coiled coil.

Belongs to the class-I aminoacyl-tRNA synthetase family. ValS type 1 subfamily. In terms of assembly, monomer.

The protein localises to the cytoplasm. The catalysed reaction is tRNA(Val) + L-valine + ATP = L-valyl-tRNA(Val) + AMP + diphosphate. Its function is as follows. Catalyzes the attachment of valine to tRNA(Val). As ValRS can inadvertently accommodate and process structurally similar amino acids such as threonine, to avoid such errors, it has a 'posttransfer' editing activity that hydrolyzes mischarged Thr-tRNA(Val) in a tRNA-dependent manner. This Mycoplasma pneumoniae (strain ATCC 29342 / M129 / Subtype 1) (Mycoplasmoides pneumoniae) protein is Valine--tRNA ligase.